A 427-amino-acid chain; its full sequence is Serine/threonine-protein kinase AFC2 (427 aa).

Residues 98–423 (YKIYSKMGEG…AREALRHPFF (326 aa)) form the Protein kinase domain. ATP-binding positions include 104–112 (MGEGTFGQV) and Lys-127. The active-site Proton acceptor is the Asp-223.

This sequence belongs to the protein kinase superfamily. CMGC Ser/Thr protein kinase family. Lammer subfamily.

It catalyses the reaction L-seryl-[protein] + ATP = O-phospho-L-seryl-[protein] + ADP + H(+). The enzyme catalyses L-threonyl-[protein] + ATP = O-phospho-L-threonyl-[protein] + ADP + H(+). It carries out the reaction L-tyrosyl-[protein] + ATP = O-phospho-L-tyrosyl-[protein] + ADP + H(+). The chain is Serine/threonine-protein kinase AFC2 (AFC2) from Arabidopsis thaliana (Mouse-ear cress).